Reading from the N-terminus, the 765-residue chain is Polyadenylate-binding protein, cytoplasmic and nuclear (765 aa).

Over residues 1 to 37 the composition is skewed to low complexity; it reads MSADASTTPAADSNVTSTPETSTTPAAPAPEVTAVES. The interval 1-49 is disordered; sequence MSADASTTPAADSNVTSTPETSTTPAAPAPEVTAVESTTAPNASQPHSA. The segment covering 38 to 48 has biased composition (polar residues); that stretch reads TTAPNASQPHS. RRM domains follow at residues 49 to 127, 137 to 214, 230 to 307, and 333 to 470; these read ASLY…WSQR, GNVF…HHIS, TNVY…RAQK, and VNLY…LAQR. 2 disordered regions span residues 364–427 and 619–657; these read VMRD…ADKK and PGYG…PEEA. Residues 377-427 show a composition bias toward basic and acidic residues; that stretch reads ESDKEKENKEATKENEKESSEAEKAEKTEEKPADSGDEKKEDKESKKADKK. A compositionally biased stretch (low complexity) spans 628–637; sequence VPVQQGQMRP. The PABC domain occupies 659 to 736; sequence AGGLTAQALS…ALNVYDEYMK (78 aa). Positions 737 to 765 are disordered; sequence NKGGESEATGEAAKPKEAAKETSTEENKS. The span at 749-765 shows a compositional bias: basic and acidic residues; sequence AKPKEAAKETSTEENKS.

Belongs to the polyadenylate-binding protein type-1 family.

It localises to the cytoplasm. It is found in the nucleus. In terms of biological role, binds the poly(A) tail of mRNA. Appears to be an important mediator of the multiple roles of the poly(A) tail in mRNA biogenesis, stability and translation. In the nucleus, involved in both mRNA cleavage and polyadenylation. Is also required for efficient mRNA export to the cytoplasm. Acts in concert with a poly(A)-specific nuclease (PAN) to affect poly(A) tail shortening, which may occur concomitantly with either nucleocytoplasmic mRNA transport or translational initiation. In the cytoplasm, stimulates translation initiation and regulates mRNA decay through translation termination-coupled poly(A) shortening, probably mediated by PAN. This Aspergillus oryzae (strain ATCC 42149 / RIB 40) (Yellow koji mold) protein is Polyadenylate-binding protein, cytoplasmic and nuclear (pab1).